The sequence spans 143 residues: Transcriptional regulator MraZ (143 aa).

SpoVT-AbrB domains follow at residues 5–47 (EFEH…PMTE) and 76–119 (ATEC…SAER).

This sequence belongs to the MraZ family. As to quaternary structure, forms oligomers.

It localises to the cytoplasm. Its subcellular location is the nucleoid. The polypeptide is Transcriptional regulator MraZ (Levilactobacillus brevis (strain ATCC 367 / BCRC 12310 / CIP 105137 / JCM 1170 / LMG 11437 / NCIMB 947 / NCTC 947) (Lactobacillus brevis)).